Here is an 848-residue protein sequence, read N- to C-terminus: DNA mismatch repair protein MutS (848 aa).

605–612 contributes to the ATP binding site; that stretch reads GPNMAGKS.

The protein belongs to the DNA mismatch repair MutS family.

Functionally, this protein is involved in the repair of mismatches in DNA. It is possible that it carries out the mismatch recognition step. This protein has a weak ATPase activity. In Leptospira interrogans serogroup Icterohaemorrhagiae serovar copenhageni (strain Fiocruz L1-130), this protein is DNA mismatch repair protein MutS.